A 276-amino-acid chain; its full sequence is Aquaporin-6 (276 aa).

Residues Met1 to Lys22 lie on the Cytoplasmic side of the membrane. The chain crosses the membrane as a helical span at residues Ala23–Leu43. Over Pro44–Ser51 the chain is Extracellular. The chain crosses the membrane as a helical span at residues Val52–Ser70. The Cytoplasmic segment spans residues Trp71 to Gly75. An intramembrane region (discontinuously helical) is located at residues Ala76–Ala85. The NPA 1 signature appears at Asn79–Ala81. Topologically, residues Tyr86–Arg96 are cytoplasmic. Residues Ala97–Val118 form a helical membrane-spanning segment. The Extracellular segment spans residues Thr119 to Thr138. The N-linked (GlcNAc...) asparagine glycan is linked to Asn134. The chain crosses the membrane as a helical span at residues Gly139–Ser159. The Cytoplasmic portion of the chain corresponds to Met160–Thr165. The chain crosses the membrane as a helical span at residues Leu166 to Ile185. At Tyr186–Gly189 the chain is on the extracellular side. Residues Cys190–Val202 constitute an intramembrane region (discontinuously helical). An NPA 2 motif is present at residues Asn193–Ala195. Residues Ile203–His210 lie on the Extracellular side of the membrane. A helical transmembrane segment spans residues Trp211–Ile231. At Leu232–Val276 the chain is on the cytoplasmic side.

The protein belongs to the MIP/aquaporin (TC 1.A.8) family. As to quaternary structure, homotetramer; each monomer provides an independent solute pore. In terms of processing, N-glycosylated. Kidney.

The protein localises to the cytoplasmic vesicle membrane. The catalysed reaction is nitrate(in) = nitrate(out). The enzyme catalyses iodide(out) = iodide(in). It carries out the reaction bromide(in) = bromide(out). It catalyses the reaction chloride(in) = chloride(out). The catalysed reaction is Na(+)(in) = Na(+)(out). The enzyme catalyses H2O(in) = H2O(out). It carries out the reaction CO2(out) = CO2(in). It catalyses the reaction NH4(+)(in) = NH4(+)(out). Its activity is regulated as follows. Activated by mercury and pH-gated, anion permeability is observed at pH 5.5 and increases markedly at pH 4.0. Selectivity for chloride increases at low pH. The water channel activity is stimulated by mercury by opposition to other aquaporins. Functionally, aquaporins form homotetrameric transmembrane channels, with each monomer independently mediating water transport across the plasma membrane along its osmotic gradient. Unlike classical aquaporins, AQP6 is an intracellular channel with selective anion permeability, particularly for nitrate, and exhibits very low water permeability. It may also facilitate the transport of gases, such as CO2 and NH4(+), as demonstrated in vitro. This Rattus norvegicus (Rat) protein is Aquaporin-6.